Here is a 4558-residue protein sequence, read N- to C-terminus: Multifunctional-autoprocessing repeats-in-toxin (4558 aa).

The N-terminal stretch at Met-1–Ala-32 is a signal peptide. RtxA repeat units follow at residues Gly-114–Ser-131, Gly-134–Thr-151, Gly-154–Leu-170, Gly-174–Thr-197, Gly-200–Thr-217, Gly-220–Thr-237, Gly-268–His-285, Gly-288–Phe-304, Gly-594–His-611, Gly-614–Thr-630, Gly-634–Thr-651, Gly-654–Gly-668, Ala-751–Gly-763, Met-769–Asn-781, Ala-792–Leu-808, Met-811–Thr-826, Met-830–Thr-845, Gly-851–Leu-865, Met-868–Ala-885, Met-887–Asn-901, Met-906–Asp-920, Met-925–Ala-942, Met-944–Leu-960, Met-982–Asn-994, Met-1001–Ser-1016, Gly-1041–Leu-1053, Ala-1077–Asp-1089, Ala-1097–Val-1112, Gly-1120–Ile-1132, Ala-1135–Asn-1152, Trp-1155–Arg-1169, Ala-1173–Val-1189, Gly-1194–Thr-1209, Ala-1211–Val-1227, Ala-1230–Phe-1246, Lys-1252–Thr-1266, Ala-1268–Thr-1285, Ala-1306–Ala-1323, and Met-1325–Asn-1342. Disordered stretches follow at residues His-1623–Ser-1688, Thr-1752–Ala-1779, and Asp-1791–Gly-1890. Polar residues predominate over residues Thr-1625–Leu-1634. Positions Ser-1635 to Gln-1654 are enriched in basic and acidic residues. Over residues Gly-1660–Ala-1679 the composition is skewed to polar residues. Residues Asp-1791–His-1815 show a composition bias toward basic and acidic residues. The segment covering His-1879–Ala-1888 has biased composition (polar residues). The region spanning Val-1988 to Ala-2422 is the ACD domain. Ser-1999–Glu-2003 is an ATP binding site. 3 residues coordinate Mg(2+): Glu-2003, Glu-2065, and Gln-2149. Arg-2255 lines the ATP pocket. Glu-2326 serves as a coordination point for Mg(2+). The membrane localization region (MLD) stretch occupies residues Glu-2574–Leu-2658. A rho inactivation domain (RID) region spans residues Glu-2734 to Leu-3098. Residues Val-3195 to Ala-3310 form an ABH effector region region. The tract at residues Ala-3404–Ser-3426 is disordered. Positions Gly-3414–Ser-3426 are enriched in polar residues. Residues Pro-3462 to Trp-3646 enclose the Peptidase C80 domain. Residues Glu-3468–Arg-3470, Lys-3495–His-3496, and Arg-3526 each bind 1D-myo-inositol hexakisphosphate. His-3532 serves as the catalytic For cysteine protease activity. Residue Ser-3577 coordinates 1D-myo-inositol hexakisphosphate. The active-site Nucleophile; for cysteine protease activity is the Cys-3581. 1D-myo-inositol hexakisphosphate contacts are provided by residues Ser-3610–Arg-3612, Arg-3623–Lys-3624, Lys-3636, and Lys-3641.

Mg(2+) serves as cofactor.

Its subcellular location is the secreted. It is found in the host cytoplasm. The protein localises to the host cytosol. It localises to the host cell membrane. The catalysed reaction is L-lysyl-/S-(2E,6E,10E)-geranylgeranyl-L-cysteinyl-[protein] + hexadecanoyl-CoA = N(6)-hexadecanoyl-L-lysyl-/S-(2E,6E,10E)-geranylgeranyl-L-cysteinyl-[protein] + CoA + H(+). The enzyme catalyses L-lysyl-/S-(2E,6E,10E)-geranylgeranyl-L-cysteinyl-[protein] + dodecanoyl-CoA = N(6)-dodecanoyl-L-lysyl-/S-(2E,6E,10E)-geranylgeranyl-L-cysteinyl-[protein] + CoA + H(+). It catalyses the reaction L-lysyl-/S-(2E,6E,10E)-geranylgeranyl-L-cysteinyl-[protein] + decanoyl-CoA = N(6)-decanoyl-L-lysyl-/S-(2E,6E,10E)-geranylgeranyl-L-cysteinyl-[protein] + CoA + H(+). Its activity is regulated as follows. Protease activity is inhibited by N-ethylmaleimide but not other protease inhibitors. Protease activity is inhibited by aza-leucine epoxide. Protease activity is activated upon binding inositol hexakisphosphate (InsP6) via an allosteric mechanism: the active site is disordered or occluded in the absence of InsP6, protecting the protease active-site sulfhydryl until the toxin enters a eukaryotic cell. Upon processing at the Leu-3441-Ala-3442 site, the peptidase C80 domain is converted to a form with much reduced affinity for InsP6, but is reactivated for high affinity binding of InsP6 by cooperative binding of both a new substrate and InsP6. Reactivation allows cleavage at other sites, specifically at Leu residues between the effector domains. In terms of biological role, precursor of a multifunctional toxin that causes destruction of the actin cytoskeleton by covalent cross-linking of actin and inactivation of Rho GTPases when translocated into the host cytoplasm. Upon translocation into the host cell, undergoes autoprocessing in cis mediated by the peptidase C80 domain (also named CPD domain): the protease activity is activated upon binding inositol hexakisphosphate (InsP6) present at the host cell membrane and delivers the Cysteine protease domain-containing toxin F3 chain to the host cytosol. The Cysteine protease domain-containing toxin F3 chain will then further cleave and release effector toxin chains that cause disassembly of the actin cytoskeleton and enhance V.cholerae colonization of the small intestine, possibly by facilitating evasion of phagocytic cells. Following autocatalytic cleavage in cis at the Leu-3441-Ala-3442 site, this chain mediates processing in trans to release other individual toxin chains to the host cytosol. Released effector toxin chains cause disassembly of the actin cytoskeleton and enhance V.cholerae colonization of the small intestine, possibly by facilitating evasion of phagocytic cells. Its function is as follows. Actin-directed toxin that catalyzes the covalent cross-linking of host cytoplasmic monomeric actin. Mediates the cross-link between 'Lys-50' of one monomer and 'Glu-270' of another actin monomer, resulting in formation of highly toxic actin oligomers that cause cell rounding. The toxin can be highly efficient at very low concentrations by acting on formin homology family proteins: toxic actin oligomers bind with high affinity to formins and adversely affect both nucleation and elongation abilities of formins, causing their potent inhibition in both profilin-dependent and independent manners. Acts as an acid--amino-acid ligase that transfers the gamma-phosphoryl group of ATP to the 'Glu-270' actin residue, resulting in the formation of an activated acyl phosphate intermediate. This intermediate is further hydrolyzed and the energy of hydrolysis is utilized for the formation of the amide bond between actin subunits. Functionally, N-epsilon-fatty acyltransferase that mediates lysine-palmitoylation of host Rho GTPase proteins, with a strong preference for host Rac1. After delivery to the host cytosol, localizes to the host cell membrane where it palmitoylates host Rho GTPase proteins, resulting in loss of all active GTP-bound Rho and subsequent actin depolymerization. Prenylation of host Rac1 at the C-terminus is required for lysine-palmitoylation. In terms of biological role, indirectly activates the small GTPase CDC42. The chain is Multifunctional-autoprocessing repeats-in-toxin from Vibrio cholerae serotype O1 (strain ATCC 39315 / El Tor Inaba N16961).